The chain runs to 309 residues: Homoserine O-succinyltransferase (309 aa).

C142 serves as the catalytic Acyl-thioester intermediate. The substrate site is built by K163 and S192. H235 acts as the Proton acceptor in catalysis. Residue E237 is part of the active site. R249 lines the substrate pocket.

It belongs to the MetA family. In terms of assembly, homodimer.

The protein localises to the cytoplasm. It carries out the reaction L-homoserine + succinyl-CoA = O-succinyl-L-homoserine + CoA. It participates in amino-acid biosynthesis; L-methionine biosynthesis via de novo pathway; O-succinyl-L-homoserine from L-homoserine: step 1/1. Its function is as follows. Transfers a succinyl group from succinyl-CoA to L-homoserine, forming succinyl-L-homoserine. The protein is Homoserine O-succinyltransferase of Escherichia coli O17:K52:H18 (strain UMN026 / ExPEC).